Consider the following 267-residue polypeptide: MSLPLNNFKRALAEGKPQFGLWAALADAYVTELLATAGFDWLLIDNEHAPNDVRSTLAQLQAVAAYASHPVVRPVRSDSALIKQLLDIGAQTLLLPMIDTAEQAADAVAATRYPPQGIRGVGSALARASRWNRIPDYLNTAADELCVLVQVESVQGMENLSAIAAVDGVDGVFFGPSDLSASMGLLGKPGDASVREAIRNGIQTVLRAGKAAGVLAPDPAIAADYLEAGATFVAVGTDTGLLSRAAADLAASYKKTATMAASPKGGY.

The Proton acceptor role is filled by His-48. The a divalent metal cation site is built by Glu-152 and Asp-178.

Belongs to the HpcH/HpaI aldolase family. It depends on a divalent metal cation as a cofactor.

It catalyses the reaction D-glyceraldehyde + 3-hydroxypyruvate = 2-dehydro-D-galactonate. The enzyme catalyses D-glyceraldehyde + 3-hydroxypyruvate = (3R,4S,5R)-3,4,5,6-tetrahydroxy-2-oxohexanoate. It carries out the reaction D-glyceraldehyde + pyruvate = 2-dehydro-3-deoxy-L-galactonate. Aldolase which can catalyze in vitro the aldolisation reaction between hydroxypyruvate (HPA) or pyruvate (PA) and D-glyceraldehyde (D-GA). The condensation of hydroxypyruvate and D-glyceraldehyde produces 2-dehydro-D-galactonate as the major product and (3R,4S,5R)-3,4,5,6-tetrahydroxy-2-oxohexanoate. The condensation of pyruvate and D-glyceraldehyde produces 2-dehydro-3-deoxy-L-galactonate. This chain is Hydroxypyruvate/pyruvate aldolase Bphyt_5830, found in Paraburkholderia phytofirmans (strain DSM 17436 / LMG 22146 / PsJN) (Burkholderia phytofirmans).